A 293-amino-acid chain; its full sequence is tRNA-cytidine(32) 2-sulfurtransferase (293 aa).

The short motif at 71-76 is the PP-loop motif element; the sequence is SGGKDS. [4Fe-4S] cluster-binding residues include C146, C149, and C237.

The protein belongs to the TtcA family. As to quaternary structure, homodimer. The cofactor is Mg(2+). [4Fe-4S] cluster serves as cofactor.

It localises to the cytoplasm. It carries out the reaction cytidine(32) in tRNA + S-sulfanyl-L-cysteinyl-[cysteine desulfurase] + AH2 + ATP = 2-thiocytidine(32) in tRNA + L-cysteinyl-[cysteine desulfurase] + A + AMP + diphosphate + H(+). It participates in tRNA modification. Catalyzes the ATP-dependent 2-thiolation of cytidine in position 32 of tRNA, to form 2-thiocytidine (s(2)C32). The sulfur atoms are provided by the cysteine/cysteine desulfurase (IscS) system. The protein is tRNA-cytidine(32) 2-sulfurtransferase of Sinorhizobium medicae (strain WSM419) (Ensifer medicae).